Consider the following 257-residue polypeptide: uncharacterized protein (257 aa).

A helical membrane pass occupies residues 6–26; sequence IFWLNLAAIIIISIVVSGGMF.

The protein belongs to the staphylococcal tandem lipoprotein family.

It localises to the cell membrane. This is an uncharacterized protein from Staphylococcus aureus (strain N315).